We begin with the raw amino-acid sequence, 359 residues long: Tyrosine-protein phosphatase non-receptor type 7 (359 aa).

The interval 1 to 34 is disordered; it reads MVQACEGRSRAQLPTLSLGADMTQPPPAKAPAKK. Residues 38 to 51 are interaction with MAP kinases; sequence LQERRGSSVALMLD. The residue at position 44 (S44) is a Phosphoserine. T66 bears the Phosphothreonine mark. 2 positions are modified to phosphoserine: S93 and S143. The 253-residue stretch at 97–349 folds into the Tyrosine-protein phosphatase domain; that stretch reads LEEEFLKIPS…QFLHHTLALY (253 aa). Substrate contacts are provided by residues D257, 290 to 296, and Q334; that span reads CSAGIGR. The Phosphocysteine intermediate role is filled by C290. Position 290 is a cysteine sulfenic acid (-SOH) (C290).

It belongs to the protein-tyrosine phosphatase family. Non-receptor class subfamily. Post-translationally, oxidized at active site cysteine. Treatment with pervanadate (vanadate and H(2)O(2)) or with antigen enhanced oxidation of active site cysteine.

It localises to the cytoplasm. It is found in the cytoskeleton. It catalyses the reaction O-phospho-L-tyrosyl-[protein] + H2O = L-tyrosyl-[protein] + phosphate. Its activity is regulated as follows. Inhibited in cells after FCER1A triggering. Its function is as follows. May play a role in the regulation of T and B-lymphocyte development and signal transduction. This chain is Tyrosine-protein phosphatase non-receptor type 7 (Ptpn7), found in Rattus norvegicus (Rat).